The primary structure comprises 479 residues: Glycerol-3-phosphate acyltransferase RAM2 (479 aa).

The next 4 helical transmembrane spans lie at 14 to 34 (YFAL…LVLA), 37 to 57 (LAGL…LIFA), 215 to 235 (SPLM…LACL), and 237 to 257 (IAAG…ALGV). The HXXXXD motif motif lies at 284–289 (HRTLLD). N-linked (GlcNAc...) asparagine glycosylation is present at N448.

It belongs to the GPAT/DAPAT family.

The protein localises to the membrane. It catalyses the reaction sn-glycerol 3-phosphate + an acyl-CoA = a 1-acyl-sn-glycero-3-phosphate + CoA. It participates in lipid metabolism; glycerolipid metabolism. Functionally, involved in the production of cutin monomers. Esterifies acyl-group from acyl-ACP to the sn-2 position of glycerol-3-phosphate, a step in cutin biosynthesis. Required for colonization of the root by mycorrhizal fungi, and appropriate hyphopodia and arbuscule formation. Cutin monomers act as plant signals that promote colonization by arbuscular mycorrhizal fungi. This signaling function has been recruited by pathogenic oomycetes to facilitate appressoria formation and their own invasion. The protein is Glycerol-3-phosphate acyltransferase RAM2 of Petunia hybrida (Petunia).